We begin with the raw amino-acid sequence, 264 residues long: Thymidylate synthase (264 aa).

A dUMP-binding site is contributed by Arg-21. His-51 provides a ligand contact to (6R)-5,10-methylene-5,6,7,8-tetrahydrofolate. 126–127 lines the dUMP pocket; the sequence is RR. Cys-146 (nucleophile) is an active-site residue. DUMP contacts are provided by residues 166 to 169, Asn-177, and 207 to 209; these read RSAD and HLY. Residue Asp-169 participates in (6R)-5,10-methylene-5,6,7,8-tetrahydrofolate binding. Residue Ala-263 coordinates (6R)-5,10-methylene-5,6,7,8-tetrahydrofolate.

It belongs to the thymidylate synthase family. Bacterial-type ThyA subfamily. In terms of assembly, homodimer.

The protein resides in the cytoplasm. The catalysed reaction is dUMP + (6R)-5,10-methylene-5,6,7,8-tetrahydrofolate = 7,8-dihydrofolate + dTMP. It functions in the pathway pyrimidine metabolism; dTTP biosynthesis. Catalyzes the reductive methylation of 2'-deoxyuridine-5'-monophosphate (dUMP) to 2'-deoxythymidine-5'-monophosphate (dTMP) while utilizing 5,10-methylenetetrahydrofolate (mTHF) as the methyl donor and reductant in the reaction, yielding dihydrofolate (DHF) as a by-product. This enzymatic reaction provides an intracellular de novo source of dTMP, an essential precursor for DNA biosynthesis. The chain is Thymidylate synthase from Bartonella quintana (strain Toulouse) (Rochalimaea quintana).